Consider the following 741-residue polypeptide: Catalase-peroxidase (741 aa).

Positions 1 to 23 (MLKKIITALGMSGMLLASSNAIA) are cleaved as a signal peptide. The segment at residues 102–223 (WHDAGTYRIY…YAATQMGLIY (122 aa)) is a cross-link (tryptophyl-tyrosyl-methioninium (Trp-Tyr) (with M-249)). Histidine 103 functions as the Proton acceptor in the catalytic mechanism. Positions 223–249 (YVNPEGPDGKPDIKGAASEIRQAFRAM) form a cross-link, tryptophyl-tyrosyl-methioninium (Tyr-Met) (with W-102). Histidine 264 is a binding site for heme b.

The protein belongs to the peroxidase family. Peroxidase/catalase subfamily. In terms of assembly, homodimer or homotetramer. The cofactor is heme b. Post-translationally, formation of the three residue Trp-Tyr-Met cross-link is important for the catalase, but not the peroxidase activity of the enzyme.

It carries out the reaction H2O2 + AH2 = A + 2 H2O. The catalysed reaction is 2 H2O2 = O2 + 2 H2O. In terms of biological role, bifunctional enzyme with both catalase and broad-spectrum peroxidase activity. In Francisella tularensis subsp. holarctica (strain FTNF002-00 / FTA), this protein is Catalase-peroxidase.